A 71-amino-acid polypeptide reads, in one-letter code: Serine palmitoyltransferase small subunit A (71 aa).

Topologically, residues 1–12 (MAGMALARAWKQ) are cytoplasmic. The chain crosses the membrane as a helical span at residues 13-29 (MSWFYYQYLLVTALYML). Residues 30–34 (EPWER) lie on the Lumenal side of the membrane. A helical transmembrane segment spans residues 35–57 (TVFNSMLVSIVGMALYTGYVFMP). Residues 58 to 71 (QHIMAILHYFEIVQ) are Cytoplasmic-facing.

This sequence belongs to the SPTSS family. SPTSSA subfamily. In terms of assembly, component of the serine palmitoyltransferase (SPT) complex, which is composed of SPTLC1, SPTLC2 or SPTLC3 and SPTSSA or SPTSSB. The heterodimer consisting of SPTLC1 and SPTLC2/SPTLC3 forms the catalytic core of the enzyme, while SPTSSA or SPTSSB subunits determine substrate specificity. SPT also interacts with ORMDL proteins, especially ORMDL3, which negatively regulate SPT activity in the presence of ceramides. Interacts with MBOAT7; the interaction plays a role in MBOAT7 localization to mitochondria-associated membranes.

Its subcellular location is the endoplasmic reticulum membrane. It participates in lipid metabolism; sphingolipid metabolism. Its function is as follows. Component of the serine palmitoyltransferase multisubunit enzyme (SPT) that catalyzes the initial and rate-limiting step in sphingolipid biosynthesis by condensing L-serine and activated acyl-CoA (most commonly palmitoyl-CoA) to form long-chain bases. The SPT complex is composed of SPTLC1, SPTLC2 or SPTLC3 and SPTSSA or SPTSSB. Within this complex, the heterodimer consisting of SPTLC1 and SPTLC2/SPTLC3 forms the catalytic core. Within the SPT complex, SPTSSA stimulates the catalytic activity and plays a role in substrate specificity, which depends upon the overall complex composition. The SPTLC1-SPTLC2-SPTSSA complex shows a strong preference for C16-CoA substrate, while the SPTLC1-SPTLC3-SPTSSA isozyme uses both C14-CoA and C16-CoA as substrates, with a slight preference for C14-CoA. Independently of its action as a SPT component, may be involved in MBOAT7 localization to mitochondria-associated membranes, a membrane bridge between the endoplasmic reticulum and mitochondria, may hence affect MBOAT7-catalyzed incorporation of arachidonic acid into phosphatidylinositol. This Homo sapiens (Human) protein is Serine palmitoyltransferase small subunit A.